The chain runs to 414 residues: Glutamyl-tRNA reductase (414 aa).

Substrate-binding positions include 49–52 (TCNR), serine 108, 113–115 (EPQ), and glutamine 119. Cysteine 50 (nucleophile) is an active-site residue. An NADP(+)-binding site is contributed by 188–193 (GAGQTG).

Belongs to the glutamyl-tRNA reductase family. As to quaternary structure, homodimer.

The catalysed reaction is (S)-4-amino-5-oxopentanoate + tRNA(Glu) + NADP(+) = L-glutamyl-tRNA(Glu) + NADPH + H(+). It functions in the pathway porphyrin-containing compound metabolism; protoporphyrin-IX biosynthesis; 5-aminolevulinate from L-glutamyl-tRNA(Glu): step 1/2. In terms of biological role, catalyzes the NADPH-dependent reduction of glutamyl-tRNA(Glu) to glutamate 1-semialdehyde (GSA). This Francisella tularensis subsp. novicida (strain U112) protein is Glutamyl-tRNA reductase.